Reading from the N-terminus, the 29-residue chain is Kappa-sparatoxin-Hv1e (29 aa).

3 cysteine pairs are disulfide-bonded: C3–C17, C10–C22, and C16–C26.

Expressed by the venom gland.

Its subcellular location is the secreted. Inhibitor of voltage-gated potassium channels of the Kv4/KCND family. Blocks calcium channels (Cav). The polypeptide is Kappa-sparatoxin-Hv1e (Heteropoda venatoria (Brown huntsman spider)).